The primary structure comprises 314 residues: Glycerol-1-phosphate dehydrogenase [NAD(P)+] (314 aa).

NAD(+)-binding positions include 52-56 (GKPLD) and 74-77 (TSAS). Substrate is bound at residue D79. S83 contacts NAD(+). D131 is a substrate binding site. D131 and H211 together coordinate Zn(2+). Position 215 (H215) interacts with substrate. H231 is a binding site for Zn(2+).

Belongs to the glycerol-1-phosphate dehydrogenase family. Requires Zn(2+) as cofactor.

It localises to the cytoplasm. It catalyses the reaction sn-glycerol 1-phosphate + NAD(+) = dihydroxyacetone phosphate + NADH + H(+). The catalysed reaction is sn-glycerol 1-phosphate + NADP(+) = dihydroxyacetone phosphate + NADPH + H(+). The protein operates within membrane lipid metabolism; glycerophospholipid metabolism. Its function is as follows. Catalyzes the NAD(P)H-dependent reduction of dihydroxyacetonephosphate (DHAP or glycerone phosphate) to glycerol 1-phosphate (G1P). The G1P thus generated is used as the glycerophosphate backbone of phospholipids in the cellular membranes of Archaea. This Korarchaeum cryptofilum (strain OPF8) protein is Glycerol-1-phosphate dehydrogenase [NAD(P)+].